A 324-amino-acid polypeptide reads, in one-letter code: Beta-ketoacyl-[acyl-carrier-protein] synthase III (324 aa).

Residues Cys-112 and His-249 contribute to the active site. An ACP-binding region spans residues 250 to 254 (QANRR). The active site involves Asn-279.

It belongs to the thiolase-like superfamily. FabH family. Homodimer.

It localises to the cytoplasm. It catalyses the reaction malonyl-[ACP] + acetyl-CoA + H(+) = 3-oxobutanoyl-[ACP] + CO2 + CoA. It functions in the pathway lipid metabolism; fatty acid biosynthesis. In terms of biological role, catalyzes the condensation reaction of fatty acid synthesis by the addition to an acyl acceptor of two carbons from malonyl-ACP. Catalyzes the first condensation reaction which initiates fatty acid synthesis and may therefore play a role in governing the total rate of fatty acid production. Possesses both acetoacetyl-ACP synthase and acetyl transacylase activities. Its substrate specificity determines the biosynthesis of branched-chain and/or straight-chain of fatty acids. The protein is Beta-ketoacyl-[acyl-carrier-protein] synthase III of Streptococcus pyogenes serotype M6 (strain ATCC BAA-946 / MGAS10394).